Consider the following 479-residue polypeptide: Adenosylhomocysteinase (479 aa).

Residues Thr-66, Asp-142, and Glu-203 each contribute to the substrate site. 204–206 provides a ligand contact to NAD(+); it reads TTT. Substrate contacts are provided by Lys-233 and Asp-237. Residues Asn-238, 267–272, Glu-290, Asn-325, 346–348, and Asn-394 contribute to the NAD(+) site; these read GYGDVG and IGH.

Belongs to the adenosylhomocysteinase family. It depends on NAD(+) as a cofactor.

The protein resides in the cytoplasm. The catalysed reaction is S-adenosyl-L-homocysteine + H2O = L-homocysteine + adenosine. Its pathway is amino-acid biosynthesis; L-homocysteine biosynthesis; L-homocysteine from S-adenosyl-L-homocysteine: step 1/1. Its function is as follows. May play a key role in the regulation of the intracellular concentration of adenosylhomocysteine. This is Adenosylhomocysteinase from Nitratidesulfovibrio vulgaris (strain ATCC 29579 / DSM 644 / CCUG 34227 / NCIMB 8303 / VKM B-1760 / Hildenborough) (Desulfovibrio vulgaris).